The following is a 351-amino-acid chain: Outer membrane porin PhoE (351 aa).

A signal peptide spans 1 to 21 (MKKSTLALVVMGITASASVQA).

It belongs to the Gram-negative porin family. Homotrimer.

The protein localises to the cell outer membrane. Uptake of inorganic phosphate, phosphorylated compounds, and some other negatively charged solutes. The protein is Outer membrane porin PhoE (phoE) of Citrobacter freundii.